The chain runs to 340 residues: Phosphate acyltransferase (340 aa).

It belongs to the PlsX family. As to quaternary structure, homodimer. Probably interacts with PlsY.

The protein localises to the cytoplasm. The catalysed reaction is a fatty acyl-[ACP] + phosphate = an acyl phosphate + holo-[ACP]. The protein operates within lipid metabolism; phospholipid metabolism. Functionally, catalyzes the reversible formation of acyl-phosphate (acyl-PO(4)) from acyl-[acyl-carrier-protein] (acyl-ACP). This enzyme utilizes acyl-ACP as fatty acyl donor, but not acyl-CoA. This is Phosphate acyltransferase from Helicobacter pylori (strain HPAG1).